Reading from the N-terminus, the 366-residue chain is Phospho-N-acetylmuramoyl-pentapeptide-transferase (366 aa).

A run of 10 helical transmembrane segments spans residues 3-23 (QIII…PVLI), 52-72 (MGGI…GIVG), 80-100 (LTAS…LGFA), 120-140 (LIGQ…FPNA), 161-181 (LAIG…YILI), 197-217 (LAAG…FWQF), 238-258 (LAIL…WNAA), 262-282 (IFMG…LSVA), 287-307 (LLMI…VIQV), and 341-361 (FWLI…GEWL).

This sequence belongs to the glycosyltransferase 4 family. MraY subfamily. The cofactor is Mg(2+).

The protein resides in the cell membrane. The catalysed reaction is UDP-N-acetyl-alpha-D-muramoyl-L-alanyl-gamma-D-glutamyl-meso-2,6-diaminopimeloyl-D-alanyl-D-alanine + di-trans,octa-cis-undecaprenyl phosphate = di-trans,octa-cis-undecaprenyl diphospho-N-acetyl-alpha-D-muramoyl-L-alanyl-D-glutamyl-meso-2,6-diaminopimeloyl-D-alanyl-D-alanine + UMP. Its pathway is cell wall biogenesis; peptidoglycan biosynthesis. Functionally, catalyzes the initial step of the lipid cycle reactions in the biosynthesis of the cell wall peptidoglycan: transfers peptidoglycan precursor phospho-MurNAc-pentapeptide from UDP-MurNAc-pentapeptide onto the lipid carrier undecaprenyl phosphate, yielding undecaprenyl-pyrophosphoryl-MurNAc-pentapeptide, known as lipid I. The chain is Phospho-N-acetylmuramoyl-pentapeptide-transferase from Corynebacterium diphtheriae (strain ATCC 700971 / NCTC 13129 / Biotype gravis).